Consider the following 116-residue polypeptide: Ribonuclease T (116 aa).

The Exonuclease domain occupies Lys-18–Phe-99. His-86 acts as the Proton donor/acceptor in catalysis.

This sequence belongs to the RNase T family. As to quaternary structure, homodimer.

Trims short 3' overhangs of a variety of RNA species, leaving a one or two nucleotide 3' overhang. Responsible for the end-turnover of tRNA: specifically removes the terminal AMP residue from uncharged tRNA (tRNA-C-C-A). Also appears to be involved in tRNA biosynthesis. The chain is Ribonuclease T from Azotobacter vinelandii.